We begin with the raw amino-acid sequence, 570 residues long: Periplasmic trehalase (570 aa).

The first 34 residues, 1–34, serve as a signal peptide directing secretion; that stretch reads MIPPEIRRSVLLQKAIKLALAGTLLTFASFSATA. Substrate-binding positions include arginine 159, 166 to 167, asparagine 203, 212 to 214, 284 to 286, and glycine 317; these read WD, RSQ, and RPE. Catalysis depends on proton donor/acceptor residues aspartate 319 and glutamate 503. Glutamate 518 contacts substrate. A disordered region spans residues 544-570; the sequence is KPCDSVPSTRPASLSATPTKTPSAATQ. Over residues 554 to 570 the composition is skewed to low complexity; that stretch reads PASLSATPTKTPSAATQ.

Belongs to the glycosyl hydrolase 37 family. In terms of assembly, monomer.

The protein resides in the periplasm. It carries out the reaction alpha,alpha-trehalose + H2O = alpha-D-glucose + beta-D-glucose. Its function is as follows. Provides the cells with the ability to utilize trehalose at high osmolarity by splitting it into glucose molecules that can subsequently be taken up by the phosphotransferase-mediated uptake system. The sequence is that of Periplasmic trehalase from Salmonella dublin (strain CT_02021853).